A 44-amino-acid chain; its full sequence is Pandinin-1 (44 aa).

In terms of tissue distribution, expressed by the venom gland.

The protein localises to the secreted. It localises to the target cell membrane. In terms of biological role, disrupts cell membranes through formation of pores. Strong antimicrobial activity against Gram-positive bacteria B.subtilis, S.epidermidis, E.faecalis and S.aureus. Less active against Gram-negative bacteria P.aeruginosa and E.coli. Has no antifungal or hemolytic activity. The sequence is that of Pandinin-1 from Pandinus imperator (Emperor scorpion).